We begin with the raw amino-acid sequence, 501 residues long: GMP synthase [glutamine-hydrolyzing] (501 aa).

In terms of domain architecture, Glutamine amidotransferase type-1 spans 1 to 185 (MVLVVDYGSQ…LFNVCKLEKN (185 aa)). Cys-75 serves as the catalytic Nucleophile. Residues His-159 and Glu-161 contribute to the active site. The region spanning 186 to 376 (WKIGDLVEEK…LGIPDRIINR (191 aa)) is the GMPS ATP-PPase domain. 213–219 (SGGVDSS) is an ATP binding site.

Homodimer.

The enzyme catalyses XMP + L-glutamine + ATP + H2O = GMP + L-glutamate + AMP + diphosphate + 2 H(+). Its pathway is purine metabolism; GMP biosynthesis; GMP from XMP (L-Gln route): step 1/1. Catalyzes the synthesis of GMP from XMP. The polypeptide is GMP synthase [glutamine-hydrolyzing] (guaA) (Thermotoga maritima (strain ATCC 43589 / DSM 3109 / JCM 10099 / NBRC 100826 / MSB8)).